The sequence spans 253 residues: Probable glutathione transferase omega-2 (253 aa).

In terms of domain architecture, GST N-terminal spans 25–105; that stretch reads GIYRIYNMRF…YLDDLFPESR (81 aa). The active-site Nucleophile is the Cys-35. Residues Lys-62, Val-75, and 89 to 90 each bind glutathione; that span reads ES. In terms of domain architecture, GST C-terminal spans 110-238; sequence DPYEKVQQKL…SQPTEMGVGF (129 aa).

It belongs to the GST superfamily. Omega family.

The catalysed reaction is RX + glutathione = an S-substituted glutathione + a halide anion + H(+). It carries out the reaction L-dehydroascorbate + 2 glutathione = glutathione disulfide + L-ascorbate. It catalyses the reaction methylarsonate + 2 glutathione + H(+) = methylarsonous acid + glutathione disulfide + H2O. Exhibits glutathione-dependent thiol transferase activity. Has dehydroascorbate reductase activity and may contribute to the recycling of ascorbic acid. Participates in the biotransformation of inorganic arsenic and reduces monomethylarsonic acid (MMA). In Caenorhabditis briggsae, this protein is Probable glutathione transferase omega-2.